A 206-amino-acid polypeptide reads, in one-letter code: Small ribosomal subunit protein uS5 (206 aa).

The segment covering 1-15 (MTDTPTKQEIQSKND) has biased composition (polar residues). The interval 1 to 50 (MTDTPTKQEIQSKNDNVPGATPVEQKKNNRNDRKRNRRGDSKNLERDSDW) is disordered. The span at 38 to 50 (RGDSKNLERDSDW) shows a compositional bias: basic and acidic residues. In terms of domain architecture, S5 DRBM spans 50-113 (WQERVVQIRR…SDGKKNLVRV (64 aa)).

Belongs to the universal ribosomal protein uS5 family. As to quaternary structure, part of the 30S ribosomal subunit. Contacts proteins S4 and S8.

In terms of biological role, with S4 and S12 plays an important role in translational accuracy. Its function is as follows. Located at the back of the 30S subunit body where it stabilizes the conformation of the head with respect to the body. The polypeptide is Small ribosomal subunit protein uS5 (Prochlorococcus marinus (strain MIT 9301)).